The sequence spans 316 residues: L-lactate dehydrogenase (316 aa).

NAD(+) is bound by residues Val-15, Asp-37, Lys-42, Tyr-68, and 82–83; that span reads GL. Residues Gln-85, Arg-91, and 123-126 contribute to the substrate site; that span reads NPVD. Residues 121–123 and Thr-146 each bind NAD(+); that span reads ASN. 151–154 contacts substrate; it reads DTSR. 2 residues coordinate beta-D-fructose 1,6-bisphosphate: Arg-156 and His-171. The active-site Proton acceptor is the His-178. Tyr-222 carries the phosphotyrosine modification. A substrate-binding site is contributed by Thr-231.

This sequence belongs to the LDH/MDH superfamily. LDH family. In terms of assembly, homotetramer.

Its subcellular location is the cytoplasm. The enzyme catalyses (S)-lactate + NAD(+) = pyruvate + NADH + H(+). Its pathway is fermentation; pyruvate fermentation to lactate; (S)-lactate from pyruvate: step 1/1. Its activity is regulated as follows. Allosterically activated by fructose 1,6-bisphosphate (FBP). Functionally, catalyzes the conversion of lactate to pyruvate. The sequence is that of L-lactate dehydrogenase from Borreliella burgdorferi (strain ATCC 35210 / DSM 4680 / CIP 102532 / B31) (Borrelia burgdorferi).